The following is a 431-amino-acid chain: 3-phosphoshikimate 1-carboxyvinyltransferase (431 aa).

3-phosphoshikimate-binding residues include K22, S23, and R27. K22 is a binding site for phosphoenolpyruvate. 2 residues coordinate phosphoenolpyruvate: G94 and R122. Residues S167, Q169, D315, and K342 each coordinate 3-phosphoshikimate. Q169 contributes to the phosphoenolpyruvate binding site. D315 (proton acceptor) is an active-site residue. The phosphoenolpyruvate site is built by R346 and R388.

The protein belongs to the EPSP synthase family. Monomer.

The protein localises to the cytoplasm. The enzyme catalyses 3-phosphoshikimate + phosphoenolpyruvate = 5-O-(1-carboxyvinyl)-3-phosphoshikimate + phosphate. The protein operates within metabolic intermediate biosynthesis; chorismate biosynthesis; chorismate from D-erythrose 4-phosphate and phosphoenolpyruvate: step 6/7. Its function is as follows. Catalyzes the transfer of the enolpyruvyl moiety of phosphoenolpyruvate (PEP) to the 5-hydroxyl of shikimate-3-phosphate (S3P) to produce enolpyruvyl shikimate-3-phosphate and inorganic phosphate. This Pelobacter propionicus (strain DSM 2379 / NBRC 103807 / OttBd1) protein is 3-phosphoshikimate 1-carboxyvinyltransferase.